A 371-amino-acid polypeptide reads, in one-letter code: Leu/Ile/Val-binding protein homolog 1 (371 aa).

The first 23 residues, 1 to 23 (MRKTLFSGVALAAVIAFGGSAWA), serve as a signal peptide directing secretion.

This sequence belongs to the leucine-binding protein family.

Functionally, component of an amino-acid transport system. This Brucella melitensis biotype 1 (strain ATCC 23456 / CCUG 17765 / NCTC 10094 / 16M) protein is Leu/Ile/Val-binding protein homolog 1.